Reading from the N-terminus, the 580-residue chain is F-box only protein 24 (580 aa).

One can recognise an F-box domain in the interval 36 to 82 (PISIQLFPPELVEHIISFLPVRDLVALGQTCRYFHEVCDGEGVWRRI). The RCC1 repeat unit spans residues 376–425 (GRIFMQGNNRYGQLGTGDKMDRGEPTQVCYLQRPITLWCGLNHSLVLSQS).

Directly interacts with SKP1 and CUL1.

In terms of biological role, substrate-recognition component of the SCF (SKP1-CUL1-F-box protein)-type E3 ubiquitin ligase complex. The chain is F-box only protein 24 (FBXO24) from Homo sapiens (Human).